A 1025-amino-acid chain; its full sequence is MKFFALFIYRPVATILLSVAITLCGILGFRMLPVAPLPQVDFPVIMVSASLPGASPETMASSVATPLERSLGRIAGVSEMTSSSSLGSTRIILQFDFDRDINGAARDVQAAINAAQSLLPSGMPSRPTYRKANPSDAPIMILTLTSDTYSQGELYDFASTQLAPTISQIDGVGDVDVGGSSLPAVRVGLNPQALFNQGVSLDDVRTAISNANVRKPQGVLEDGTHRWQIQTNDELKTAAEYQPLIIHYNNGGAVRLGDVATVTDSVQDVRNAGMTNAKPAILLMIRKLPEANIIQTVDSIRARLPELQSTIPAAIDLQIAQDRSPTIRASLEEVEQTLIISVALVILVVFLFLRSGRATIIPAVAVPVSLIGTFAAMYLCGFSLNNLSLMALTIATGFVVDDAIVVLENIARHLEAGMKPLQAALQGTREVGFTVLSMSLSLVAVFLPLLLMGGLPGRLLREFAVTLSVAIGISLLVSLTLTPMMCGWMLKASKPREQKRLRGFGRMLVALQQGYGKSLKWVLNHTRLVGVVLLGTIALNIWLYISIPKTFFPEQDTGVLMGGIQADQSISFQAMRGKLQDFMKIIRDDPAVDNVTGFTGGSRVNSGMMFITLKPRGERSETAQQIIDRLRVKLAKEPGANLFLMAVQDIRVGGRQSNASYQYTLLSDDLAALREWEPKIRKKLATLPELADVNSDQQDNGAEMNLVYDRDTMARLGIDVQAANSLLNNAFGQRQISTIYQPMNQYKVVMEVDPRYTQDISALEKMFVINNEGKAIPLSYFAKWQPANAPLSVNHQGLSAASTISFNLPTGKSLSDASAAIDRAMTQLGVPSTVRGSFAGTAQVFQETMNSQVILIIAAIATVYIVLGILYESYVHPLTILSTLPSAGVGALLALELFNAPFSLIALIGIMLLIGIVKKNAIMMVDFALEAQRHGNLTPQEAIFQACLLRFRPIMMTTLAALFGALPLVLSGGDGSELRQPLGITIVGGLVMSQLLTLYTTPVVYLFFDRLRLRFSRKPKQTVTE.

Transmembrane regions (helical) follow at residues Phe-3–Leu-23, Glu-333–Leu-353, Ile-360–Cys-380, Leu-387–Leu-407, Val-431–Leu-451, Phe-463–Pro-483, Leu-528–Pro-548, Val-853–Ser-873, Val-875–Leu-895, Leu-897–Val-917, Pro-953–Gly-973, and Ile-984–Val-1004.

It belongs to the resistance-nodulation-cell division (RND) (TC 2.A.6) family. MdtC subfamily. As to quaternary structure, part of a tripartite efflux system composed of MdtA, MdtB and MdtC. MdtC forms a heteromultimer with MdtB.

The protein localises to the cell inner membrane. In terms of biological role, the MdtABC tripartite complex confers resistance against novobiocin and deoxycholate. The sequence is that of Multidrug resistance protein MdtC from Escherichia coli (strain SMS-3-5 / SECEC).